The following is a 399-amino-acid chain: Stomatin-like protein 1 (399 aa).

Positions 6–10 match the Tyrosine-type lysosomal sorting signal motif; it reads GYRAL. At serine 28 the chain carries Phosphoserine. A helical; Signal-anchor for type III membrane protein membrane pass occupies residues 58 to 78; it reads LVSVLGFLLLLLTFPISGWFA. Topologically, residues 79 to 399 are cytoplasmic; it reads LKIVPTYERM…KLEAVLKALK (321 aa). Residues 288–399 form the SCP2 domain; sequence KQPVAEGLLT…KLEAVLKALK (112 aa).

This sequence belongs to the band 7/mec-2 family. In terms of assembly, interacts with STOM; may redistribute STOM from the plasma membrane to late endosomes. In terms of tissue distribution, expressed in dorsal root ganglion neurons.

It localises to the membrane. The protein resides in the cytoplasmic vesicle. It is found in the cell membrane. Its subcellular location is the late endosome membrane. The protein localises to the membrane raft. May play a role in cholesterol transfer to late endosomes. May play a role in modulating membrane acid-sensing ion channels. Can specifically inhibit proton-gated current of ASIC1 isoform 1. Can increase inactivation speed of ASIC3. May be involved in regulation of proton sensing in dorsal root ganglions. This chain is Stomatin-like protein 1 (Stoml1), found in Mus musculus (Mouse).